We begin with the raw amino-acid sequence, 177 residues long: Large ribosomal subunit protein uL6 (177 aa).

It belongs to the universal ribosomal protein uL6 family. Part of the 50S ribosomal subunit.

Its function is as follows. This protein binds to the 23S rRNA, and is important in its secondary structure. It is located near the subunit interface in the base of the L7/L12 stalk, and near the tRNA binding site of the peptidyltransferase center. This Citrobacter koseri (strain ATCC BAA-895 / CDC 4225-83 / SGSC4696) protein is Large ribosomal subunit protein uL6.